Consider the following 468-residue polypeptide: Glutamine synthetase (468 aa).

Residues 11–96 enclose the GS beta-grasp domain; it reads HDVKWIDLRF…LVCDIIEPST (86 aa). Residues 104–468 enclose the GS catalytic domain; that stretch reads PRAIAHRAEE…PLEYELYYSC (365 aa). Mg(2+) contacts are provided by E129 and E131. Residue E207 coordinates ATP. Residues E212 and E220 each contribute to the Mg(2+) site. L-glutamate is bound by residues 264 to 265 and G265; that span reads NG. H269 contacts Mg(2+). ATP contacts are provided by residues 271 to 273 and S273; that span reads HMS. L-glutamate is bound by residues R321, E327, and R339. ATP-binding residues include R339, R344, and R352. E357 contacts Mg(2+). R359 provides a ligand contact to L-glutamate. Y397 is modified (O-AMP-tyrosine).

The protein belongs to the glutamine synthetase family. In terms of assembly, oligomer of 12 subunits arranged in the form of two hexagons. Mg(2+) is required as a cofactor. Requires Mn(2+) as cofactor.

The catalysed reaction is L-glutamate + NH4(+) + ATP = L-glutamine + ADP + phosphate + H(+). When cellular nitrogen levels are high, the C-terminal adenylyl transferase (AT) of GlnE inhibits GlnA by covalent transfer of an adenylyl group from ATP to Tyr-397. Conversely, when nitrogen levels are low, the N-terminal adenylyl removase (AR) of GlnE activates GlnA by removing the adenylyl group by phosphorolysis. The fully adenylated enzyme complex is inactive. Its function is as follows. Catalyzes the formation of glutamine from glutamate and ammonia. In vitro, can also use hydroxylamine, methylamine and ethylamine, with 32%, 7% and 1% activity compared to ammonia, respectively. The protein is Glutamine synthetase of Pseudomonas taetrolens.